A 377-amino-acid polypeptide reads, in one-letter code: Chaperone protein DnaJ (377 aa).

The J domain occupies 5 to 70 (DFYETLGVSK…QKRAAYDRFG (66 aa)). The CR-type zinc finger occupies 138–216 (GKTAQIRVPT…CHGQGRVTEE (79 aa)). 8 residues coordinate Zn(2+): cysteine 151, cysteine 154, cysteine 168, cysteine 171, cysteine 190, cysteine 193, cysteine 204, and cysteine 207. CXXCXGXG motif repeat units lie at residues 151 to 158 (CDVCSGSG), 168 to 175 (CATCQGSG), 190 to 197 (CPTCHGRG), and 204 to 211 (CGKCHGQG).

This sequence belongs to the DnaJ family. Homodimer. Zn(2+) is required as a cofactor.

It localises to the cytoplasm. In terms of biological role, participates actively in the response to hyperosmotic and heat shock by preventing the aggregation of stress-denatured proteins and by disaggregating proteins, also in an autonomous, DnaK-independent fashion. Unfolded proteins bind initially to DnaJ; upon interaction with the DnaJ-bound protein, DnaK hydrolyzes its bound ATP, resulting in the formation of a stable complex. GrpE releases ADP from DnaK; ATP binding to DnaK triggers the release of the substrate protein, thus completing the reaction cycle. Several rounds of ATP-dependent interactions between DnaJ, DnaK and GrpE are required for fully efficient folding. Also involved, together with DnaK and GrpE, in the DNA replication of plasmids through activation of initiation proteins. This Agrobacterium fabrum (strain C58 / ATCC 33970) (Agrobacterium tumefaciens (strain C58)) protein is Chaperone protein DnaJ.